The sequence spans 314 residues: Protein OPG185 (314 aa).

The N-terminal stretch at 1 to 16 (MTRLPILLLLISLVYA) is a signal peptide. An Ig-like V-type domain is found at 17–121 (TPFPQTSKKI…NDTDKVDYEE (105 aa)). The Virion surface segment spans residues 17-278 (TPFPQTSKKI…SNYKTKDFVE (262 aa)). Cysteines 34 and 103 form a disulfide. N-linked (GlcNAc...) asparagine; by host glycosylation is found at Asn37, Asn69, Asn112, and Asn161. Residues 193–202 (NTVSASSGES) show a composition bias toward polar residues. Residues 193-214 (NTVSASSGESTTDETPEPITDK) form a disordered region. A glycan (N-linked (GlcNAc...) asparagine; by host) is linked at Asn253. The chain crosses the membrane as a helical span at residues 279-302 (IFGITALIILSAVAIFCITYYIYN). At 303 to 314 (KRSRKYKTENKV) the chain is on the intravirion side.

The protein belongs to the orthopoxvirus OPG185 family. Heterodimerizes with OPG040. The heterodimer OPG185-OPG040 interacts with components of the entry fusion complex OPG143 and OPG094. Heterodimer with C3/VPC protein; disulfide-linked. Post-translationally, glycosylated; contains phosphate and sulfate-substituted glycans. O-glycosylation is required for hemagglutination and hemadsorption activities of infected cell membranes.

The protein resides in the virion membrane. The protein localises to the host membrane. Functionally, prevents cell to cell fusion by interacting with and directing the viral OPG040 protein on the host plasma membrane. The OPG185-OPG040 complex associates with components of the entry fusion complex (EFC) presumably to avoid superinfection and syncytium formation. Via its interaction with C3/VCP protein, protects the infected cell and probably also the extracellular enveloped virus from complement attack. The chain is Protein OPG185 (OPG185) from Bos taurus (Bovine).